The following is a 480-amino-acid chain: Bifunctional pantoate ligase/cytidylate kinase (480 aa).

A pantoate--beta-alanine ligase region spans residues 1–243 (MPTMGGLHQG…CGTTRLIDHV (243 aa)). ATP is bound at residue 4-11 (MGGLHQGH). The Proton donor role is filled by His11. Gln34 is a binding site for (R)-pantoate. Position 34 (Gln34) interacts with beta-alanine. 123–126 (GEKD) is an ATP binding site. Gln129 serves as a coordination point for (R)-pantoate. ATP contacts are provided by residues Val152 and 160–163 (LSSR). The cytidylate kinase stretch occupies residues 244–480 (FLMTRQPLVA…GEEAWPTPAG (237 aa)).

In the N-terminal section; belongs to the pantothenate synthetase family. This sequence in the C-terminal section; belongs to the cytidylate kinase family. Type 1 subfamily.

It localises to the cytoplasm. It carries out the reaction (R)-pantoate + beta-alanine + ATP = (R)-pantothenate + AMP + diphosphate + H(+). The enzyme catalyses CMP + ATP = CDP + ADP. The catalysed reaction is dCMP + ATP = dCDP + ADP. Its pathway is cofactor biosynthesis; (R)-pantothenate biosynthesis; (R)-pantothenate from (R)-pantoate and beta-alanine: step 1/1. Catalyzes the condensation of pantoate with beta-alanine in an ATP-dependent reaction via a pantoyl-adenylate intermediate. Its function is as follows. Catalyzes the transfer of a phosphate group from ATP to either CMP or dCMP to form CDP or dCDP and ADP, respectively. The protein is Bifunctional pantoate ligase/cytidylate kinase of Synechococcus sp. (strain CC9605).